Here is a 418-residue protein sequence, read N- to C-terminus: Tyrosine--tRNA ligase (418 aa).

Residue Tyr-35 participates in L-tyrosine binding. Positions 40–49 match the 'HIGH' region motif; the sequence is PTAKSLHIGH. Residues Tyr-168 and Gln-172 each coordinate L-tyrosine. The short motif at 228–232 is the 'KMSKS' region element; that stretch reads KYGKT. Position 231 (Lys-231) interacts with ATP. The region spanning 352–410 is the S4 RNA-binding domain; it reads PTVVGAMVAAGVVDTKSGGRRAVAEGGAYLNNVKVADPDQRLTDDDFLCGRVALVRRGK.

The protein belongs to the class-I aminoacyl-tRNA synthetase family. TyrS type 1 subfamily. As to quaternary structure, homodimer.

It localises to the cytoplasm. It catalyses the reaction tRNA(Tyr) + L-tyrosine + ATP = L-tyrosyl-tRNA(Tyr) + AMP + diphosphate + H(+). Functionally, catalyzes the attachment of tyrosine to tRNA(Tyr) in a two-step reaction: tyrosine is first activated by ATP to form Tyr-AMP and then transferred to the acceptor end of tRNA(Tyr). This Cutibacterium acnes (strain DSM 16379 / KPA171202) (Propionibacterium acnes) protein is Tyrosine--tRNA ligase.